The sequence spans 371 residues: tRNA-specific 2-thiouridylase MnmA (371 aa).

Residues 12–19 (GMSGGVDS) and Met38 each bind ATP. The segment at 98–100 (NPD) is interaction with target base in tRNA. Cys103 acts as the Nucleophile in catalysis. Cys103 and Cys200 are oxidised to a cystine. Gly127 is an ATP binding site. An interaction with tRNA region spans residues 150 to 152 (KDQ). Cys200 acts as the Cysteine persulfide intermediate in catalysis. The interval 308–309 (RY) is interaction with tRNA.

It belongs to the MnmA/TRMU family.

The protein resides in the cytoplasm. The catalysed reaction is S-sulfanyl-L-cysteinyl-[protein] + uridine(34) in tRNA + AH2 + ATP = 2-thiouridine(34) in tRNA + L-cysteinyl-[protein] + A + AMP + diphosphate + H(+). Catalyzes the 2-thiolation of uridine at the wobble position (U34) of tRNA, leading to the formation of s(2)U34. This is tRNA-specific 2-thiouridylase MnmA from Oceanobacillus iheyensis (strain DSM 14371 / CIP 107618 / JCM 11309 / KCTC 3954 / HTE831).